Here is a 312-residue protein sequence, read N- to C-terminus: Methionyl-tRNA formyltransferase (312 aa).

A (6S)-5,6,7,8-tetrahydrofolate-binding site is contributed by 109 to 112; sequence SILP.

This sequence belongs to the Fmt family.

The catalysed reaction is L-methionyl-tRNA(fMet) + (6R)-10-formyltetrahydrofolate = N-formyl-L-methionyl-tRNA(fMet) + (6S)-5,6,7,8-tetrahydrofolate + H(+). In terms of biological role, attaches a formyl group to the free amino group of methionyl-tRNA(fMet). The formyl group appears to play a dual role in the initiator identity of N-formylmethionyl-tRNA by promoting its recognition by IF2 and preventing the misappropriation of this tRNA by the elongation apparatus. This chain is Methionyl-tRNA formyltransferase, found in Dictyoglomus thermophilum (strain ATCC 35947 / DSM 3960 / H-6-12).